The following is a 333-amino-acid chain: Transcription initiation factor IIB (333 aa).

The segment at 33–64 adopts a TFIIB-type zinc-finger fold; that stretch reads EIYRCPICGNDRFVYNYERGEVVCIVCGAVVQ. Residues cysteine 37, cysteine 40, cysteine 56, and cysteine 59 each coordinate Zn(2+). 2 tandem repeats follow at residues 149–232 and 243–324.

This sequence belongs to the TFIIB family.

In terms of biological role, stabilizes TBP binding to an archaeal box-A promoter. Also responsible for recruiting RNA polymerase II to the pre-initiation complex (DNA-TBP-TFIIB). The protein is Transcription initiation factor IIB of Pyrobaculum arsenaticum (strain DSM 13514 / JCM 11321 / PZ6).